The sequence spans 148 residues: UPF0178 protein SUN_1096 (148 aa).

Belongs to the UPF0178 family.

In Sulfurovum sp. (strain NBC37-1), this protein is UPF0178 protein SUN_1096.